The sequence spans 269 residues: Hydroxyethylthiazole kinase (269 aa).

Met-48 serves as a coordination point for substrate. ATP-binding residues include Lys-124 and Thr-170. Gly-197 is a substrate binding site.

Belongs to the Thz kinase family. Mg(2+) is required as a cofactor.

It carries out the reaction 5-(2-hydroxyethyl)-4-methylthiazole + ATP = 4-methyl-5-(2-phosphooxyethyl)-thiazole + ADP + H(+). Its pathway is cofactor biosynthesis; thiamine diphosphate biosynthesis; 4-methyl-5-(2-phosphoethyl)-thiazole from 5-(2-hydroxyethyl)-4-methylthiazole: step 1/1. Its function is as follows. Catalyzes the phosphorylation of the hydroxyl group of 4-methyl-5-beta-hydroxyethylthiazole (THZ). The polypeptide is Hydroxyethylthiazole kinase (Clostridium kluyveri (strain NBRC 12016)).